The following is a 321-amino-acid chain: Prephenate dehydratase (321 aa).

The Prephenate dehydratase domain maps to 3–189; the sequence is RIAYLGPEGT…ARTRFVLVGR (187 aa). In terms of domain architecture, ACT spans 203–280; sequence SAVLRIDNQP…ADVRYLGSWP (78 aa).

As to quaternary structure, homodimer.

The catalysed reaction is prephenate + H(+) = 3-phenylpyruvate + CO2 + H2O. Its pathway is amino-acid biosynthesis; L-phenylalanine biosynthesis; phenylpyruvate from prephenate: step 1/1. The polypeptide is Prephenate dehydratase (pheA) (Mycobacterium bovis (strain ATCC BAA-935 / AF2122/97)).